Reading from the N-terminus, the 445-residue chain is Phosphoglucosamine mutase (445 aa).

The Phosphoserine intermediate role is filled by serine 101. The Mg(2+) site is built by serine 101, aspartate 240, aspartate 242, and aspartate 244. Serine 101 bears the Phosphoserine mark.

It belongs to the phosphohexose mutase family. It depends on Mg(2+) as a cofactor. In terms of processing, activated by phosphorylation.

It catalyses the reaction alpha-D-glucosamine 1-phosphate = D-glucosamine 6-phosphate. Functionally, catalyzes the conversion of glucosamine-6-phosphate to glucosamine-1-phosphate. This Ectopseudomonas mendocina (strain ymp) (Pseudomonas mendocina) protein is Phosphoglucosamine mutase.